The sequence spans 336 residues: D-alanine--D-alanine ligase (336 aa).

In terms of domain architecture, ATP-grasp spans 124-330; that stretch reads KMWFSALGIP…FTEYLSLVIN (207 aa). 154–209 is an ATP binding site; the sequence is ALENWGSIFVKAASQGSSVGCYKVDDSSKVAGVLKDAFGYAPYVIVEKTIKARELE. Residues aspartate 284, glutamate 297, and asparagine 299 each contribute to the Mg(2+) site.

The protein belongs to the D-alanine--D-alanine ligase family. It depends on Mg(2+) as a cofactor. The cofactor is Mn(2+).

It is found in the cytoplasm. It carries out the reaction 2 D-alanine + ATP = D-alanyl-D-alanine + ADP + phosphate + H(+). The protein operates within cell wall biogenesis; peptidoglycan biosynthesis. Cell wall formation. The chain is D-alanine--D-alanine ligase from Shewanella sp. (strain MR-4).